A 1346-amino-acid polypeptide reads, in one-letter code: G-protein coupled receptor-associated sorting protein 1 (1346 aa).

3 disordered regions span residues 1–101 (MTGA…FRGE), 144–177 (TESI…RPRP), and 192–258 (ADKS…SAKT). Positions 21–36 (ENANAAEVEPEVPLVV) are enriched in low complexity. A compositionally biased stretch (basic residues) spans 211–226 (FRPRKSMKSNTRFRHM). The residue at position 295 (Ser-295) is a Phosphoserine. Disordered regions lie at residues 311–399 (EEAK…RPEE) and 461–485 (VSSF…SKSM). Basic residues predominate over residues 316 to 333 (RSKPRARKGVNMRARHQA). Basic and acidic residues-rich tracts occupy residues 347–361 (DKNK…EEKA) and 370–399 (KKEP…RPEE). Polar residues predominate over residues 461–484 (VSSFCLGSGKKTSMESGPKATSKS). Phosphoserine is present on residues Ser-619 and Ser-626. Thr-860 is subject to Phosphothreonine. Position 862 is a phosphoserine (Ser-862). The interval 984 to 1004 (ACEPESSTEHEPDPSRRPQSW) is disordered. Over residues 990–1003 (STEHEPDPSRRPQS) the composition is skewed to basic and acidic residues.

Belongs to the GPRASP family. In terms of assembly, interacts with cytoplasmic tails of a variety of G-protein coupled receptors such as delta opioid receptor/OPRD1, beta-2 adrenergic receptor/ADRB2 and D4 dopamine receptor/DRD4. Interacts with BECN2; the interaction is direct and with D2 dopamine receptor/DRD2. Interacts with PER1. Expressed in the brain.

It is found in the cytoplasm. Its function is as follows. Modulates lysosomal sorting and functional down-regulation of a variety of G-protein coupled receptors. Targets receptors for degradation in lysosomes via its interaction with BECN2. This Rattus norvegicus (Rat) protein is G-protein coupled receptor-associated sorting protein 1 (Gprasp1).